The following is a 308-amino-acid chain: Ribosomal protein L11 methyltransferase (308 aa).

Residues T160, G181, D203, and N245 each coordinate S-adenosyl-L-methionine.

Belongs to the methyltransferase superfamily. PrmA family.

The protein resides in the cytoplasm. The enzyme catalyses L-lysyl-[protein] + 3 S-adenosyl-L-methionine = N(6),N(6),N(6)-trimethyl-L-lysyl-[protein] + 3 S-adenosyl-L-homocysteine + 3 H(+). Methylates ribosomal protein L11. This is Ribosomal protein L11 methyltransferase from Thermoanaerobacter sp. (strain X514).